The following is a 460-amino-acid chain: UDP-N-acetylmuramate--L-alanine ligase (460 aa).

Position 119-125 (119-125) interacts with ATP; sequence GSHGKTT.

It belongs to the MurCDEF family.

It is found in the cytoplasm. It carries out the reaction UDP-N-acetyl-alpha-D-muramate + L-alanine + ATP = UDP-N-acetyl-alpha-D-muramoyl-L-alanine + ADP + phosphate + H(+). It participates in cell wall biogenesis; peptidoglycan biosynthesis. Functionally, cell wall formation. In Alkaliphilus metalliredigens (strain QYMF), this protein is UDP-N-acetylmuramate--L-alanine ligase.